The following is a 115-amino-acid chain: Procyclic form-specific polypeptide (115 aa).

Positions 1 to 27 (MAPRSLYLLAVLLFSANLFAGVGFAAA) are cleaved as a signal peptide. Positions 27-97 (AAEGPEDKGL…PEPEPGAATL (71 aa)) are disordered. The span at 31–52 (PEDKGLTKGGKGKGEKGTKVGA) shows a compositional bias: basic and acidic residues. Residue Asn-56 is glycosylated (N-linked (GlcNAc...) asparagine). A run of 17 repeats spans residues 59–60 (DP), 61–62 (DP), 63–64 (EP), 65–66 (EP), 67–68 (EP), 69–70 (EP), 71–72 (EP), 73–74 (EP), 75–76 (EP), 77–78 (EP), 79–80 (EP), 81–82 (EP), 83–84 (EP), 85–86 (EP), 87–88 (EP), 89–90 (EP), and 91–92 (EP). The 17 X 2 AA tandem repeats of [DE]-P stretch occupies residues 59–92 (DPDPEPEPEPEPEPEPEPEPEPEPEPEPEPEPEP). Acidic residues predominate over residues 60–90 (PDPEPEPEPEPEPEPEPEPEPEPEPEPEPEP). Gly-93 is lipidated: GPI-anchor amidated glycine. A propeptide spans 94 to 115 (AATLKSVALPFAIAAAALVAAF) (removed in mature form).

The protein resides in the cell membrane. Functionally, major surface antigen of procyclic forms. The sequence is that of Procyclic form-specific polypeptide (PROA) from Trypanosoma brucei brucei.